We begin with the raw amino-acid sequence, 421 residues long: Serine--tRNA ligase (421 aa).

230-232 (TAE) serves as a coordination point for L-serine. 261–263 (RRE) contacts ATP. Glutamate 284 is a binding site for L-serine. 348–351 (EISS) contacts ATP. Serine 383 is an L-serine binding site.

The protein belongs to the class-II aminoacyl-tRNA synthetase family. Type-1 seryl-tRNA synthetase subfamily. As to quaternary structure, homodimer. The tRNA molecule binds across the dimer.

The protein resides in the cytoplasm. It catalyses the reaction tRNA(Ser) + L-serine + ATP = L-seryl-tRNA(Ser) + AMP + diphosphate + H(+). The catalysed reaction is tRNA(Sec) + L-serine + ATP = L-seryl-tRNA(Sec) + AMP + diphosphate + H(+). The protein operates within aminoacyl-tRNA biosynthesis; selenocysteinyl-tRNA(Sec) biosynthesis; L-seryl-tRNA(Sec) from L-serine and tRNA(Sec): step 1/1. Catalyzes the attachment of serine to tRNA(Ser). Is also able to aminoacylate tRNA(Sec) with serine, to form the misacylated tRNA L-seryl-tRNA(Sec), which will be further converted into selenocysteinyl-tRNA(Sec). The protein is Serine--tRNA ligase of Finegoldia magna (strain ATCC 29328 / DSM 20472 / WAL 2508) (Peptostreptococcus magnus).